We begin with the raw amino-acid sequence, 152 residues long: ADP-ribose glycohydrolase OARD1 (152 aa).

Alanine 2 is modified (N-acetylalanine). The Macro domain occupies 2 to 152 (ASSLNEDPEG…TDIKITVYTL (151 aa)). Serine 4 carries the phosphoserine modification. Leucine 21 is a binding site for substrate. The active-site Nucleophile is the lysine 84. Substrate-binding positions include 119–125 (RIGCGLD) and leucine 152. Catalysis depends on aspartate 125, which acts as the Proton acceptor.

Ubiquitous.

It is found in the nucleus. Its subcellular location is the nucleoplasm. The protein localises to the nucleolus. It localises to the chromosome. The enzyme catalyses 2''-O-acetyl-ADP-D-ribose + H2O = ADP-D-ribose + acetate + H(+). The catalysed reaction is 5-O-(ADP-D-ribosyl)-L-glutamyl-[protein] + H2O = L-glutamyl-[protein] + ADP-D-ribose + H(+). It carries out the reaction alpha-NAD(+) + H2O = ADP-D-ribose + nicotinamide + H(+). With respect to regulation, subject to competitive inhibition by the product ADP-ribose. In terms of biological role, ADP-ribose glycohydrolase that hydrolyzes ADP-ribose and acts on different substrates, such as proteins ADP-ribosylated on glutamate and O-acetyl-ADP-D-ribose. Specifically acts as a glutamate mono-ADP-ribosylhydrolase by mediating the removal of mono-ADP-ribose attached to glutamate residues on proteins. Does not act on poly-ADP-ribosylated proteins: the poly-ADP-ribose chain of poly-ADP-ribosylated glutamate residues must by hydrolyzed into mono-ADP-ribosylated glutamate by PARG to become a substrate for OARD1. Deacetylates O-acetyl-ADP ribose, a signaling molecule generated by the deacetylation of acetylated lysine residues in histones and other proteins. Catalyzes the deacylation of O-acetyl-ADP-ribose, O-propionyl-ADP-ribose and O-butyryl-ADP-ribose, yielding ADP-ribose plus acetate, propionate and butyrate, respectively. This is ADP-ribose glycohydrolase OARD1 from Homo sapiens (Human).